Here is a 445-residue protein sequence, read N- to C-terminus: Tubulin beta-3 chain (445 aa).

8 residues coordinate GTP: Gln-11, Glu-69, Ser-138, Gly-142, Thr-143, Gly-144, Asn-204, and Asn-226. Position 69 (Glu-69) interacts with Mg(2+). Residues 417–426 are compositionally biased toward polar residues; it reads DLVSEYQQYQ. The tract at residues 417–445 is disordered; it reads DLVSEYQQYQEASADDEADEFDEEEGDEE. A compositionally biased stretch (acidic residues) spans 429 to 445; that stretch reads SADDEADEFDEEEGDEE.

This sequence belongs to the tubulin family. In terms of assembly, dimer of alpha and beta chains. A typical microtubule is a hollow water-filled tube with an outer diameter of 25 nm and an inner diameter of 15 nM. Alpha-beta heterodimers associate head-to-tail to form protofilaments running lengthwise along the microtubule wall with the beta-tubulin subunit facing the microtubule plus end conferring a structural polarity. Microtubules usually have 13 protofilaments but different protofilament numbers can be found in some organisms and specialized cells. Requires Mg(2+) as cofactor.

It localises to the cytoplasm. It is found in the cytoskeleton. Its function is as follows. Tubulin is the major constituent of microtubules, a cylinder consisting of laterally associated linear protofilaments composed of alpha- and beta-tubulin heterodimers. Microtubules grow by the addition of GTP-tubulin dimers to the microtubule end, where a stabilizing cap forms. Below the cap, tubulin dimers are in GDP-bound state, owing to GTPase activity of alpha-tubulin. The sequence is that of Tubulin beta-3 chain (TUBB3) from Oomycete-like sp. (strain MacKay2000).